A 426-amino-acid polypeptide reads, in one-letter code: Limonoid 21-O-acetyltransferse (426 aa).

Residues H152 and D365 each act as proton acceptor in the active site.

Belongs to the plant acyltransferase family. In terms of assembly, monomer. As to expression, expressed in maturing fruits and in juice vesicles.

It catalyses the reaction isomeliandiol + acetyl-CoA = 21-O-acetyl-isomeliandiol + CoA. Its pathway is secondary metabolite biosynthesis; terpenoid biosynthesis. Acetyltransferase involved in the biosynthesis of limonoids triterpene natural products such as limonin, a compound with insecticidal activity responsible for the bitter taste in citrus. Catalyzes the formation of 21-O-acetyl-isomeliandiol from isomeliandiol. This chain is Limonoid 21-O-acetyltransferse, found in Citrus sinensis (Sweet orange).